The sequence spans 1004 residues: Retrovirus-related Pol polyprotein from type-1 retrotransposable element R1 (1004 aa).

Positions 450-717 (QCLLESYFPQ…SEVKHLGIFV (268 aa)) constitute a Reverse transcriptase domain. Residues 853 to 1004 (LSGSQFKELL…RLMRGMRIRE (152 aa)) form a nucleic acid-binding endonuclease region.

The enzyme catalyses DNA(n) + a 2'-deoxyribonucleoside 5'-triphosphate = DNA(n+1) + diphosphate. This chain is Retrovirus-related Pol polyprotein from type-1 retrotransposable element R1, found in Bradysia coprophila (Dark-winged fungus gnat).